Consider the following 218-residue polypeptide: Small ribosomal subunit protein uS3 (218 aa).

The region spanning 43-113 is the KH type-2 domain; the sequence is IREHIERKLA…KVQVNVREVS (71 aa).

Belongs to the universal ribosomal protein uS3 family. In terms of assembly, part of the 30S ribosomal subunit. Forms a tight complex with proteins S10 and S14.

In terms of biological role, binds the lower part of the 30S subunit head. Binds mRNA in the 70S ribosome, positioning it for translation. The protein is Small ribosomal subunit protein uS3 of Rubrobacter xylanophilus (strain DSM 9941 / JCM 11954 / NBRC 16129 / PRD-1).